The chain runs to 178 residues: Cytochrome b6-f complex iron-sulfur subunit (178 aa).

The chain crosses the membrane as a helical span at residues Leu20–Met42. One can recognise a Rieske domain in the interval Lys65 to Val161. Cys107, His109, Cys125, and His128 together coordinate [2Fe-2S] cluster. Cys112 and Cys127 form a disulfide bridge.

This sequence belongs to the Rieske iron-sulfur protein family. As to quaternary structure, the 4 large subunits of the cytochrome b6-f complex are cytochrome b6, subunit IV (17 kDa polypeptide, PetD), cytochrome f and the Rieske protein, while the 4 small subunits are PetG, PetL, PetM and PetN. The complex functions as a dimer. [2Fe-2S] cluster serves as cofactor.

It is found in the cellular thylakoid membrane. It carries out the reaction 2 oxidized [plastocyanin] + a plastoquinol + 2 H(+)(in) = 2 reduced [plastocyanin] + a plastoquinone + 4 H(+)(out). Its function is as follows. Component of the cytochrome b6-f complex, which mediates electron transfer between photosystem II (PSII) and photosystem I (PSI), cyclic electron flow around PSI, and state transitions. This Prochlorococcus marinus (strain MIT 9312) protein is Cytochrome b6-f complex iron-sulfur subunit.